A 363-amino-acid chain; its full sequence is tRNA N6-adenosine threonylcarbamoyltransferase (363 aa).

Positions 138, 142, and 159 each coordinate Fe cation. Residues Y159–G163, D191, D212, and S295 contribute to the substrate site. D323 lines the Fe cation pocket.

This sequence belongs to the KAE1 / TsaD family. Fe(2+) is required as a cofactor.

The protein resides in the cytoplasm. It carries out the reaction L-threonylcarbamoyladenylate + adenosine(37) in tRNA = N(6)-L-threonylcarbamoyladenosine(37) in tRNA + AMP + H(+). Functionally, required for the formation of a threonylcarbamoyl group on adenosine at position 37 (t(6)A37) in tRNAs that read codons beginning with adenine. Is probably involved in the transfer of the threonylcarbamoyl moiety of threonylcarbamoyl-AMP (TC-AMP) to the N6 group of A37. The chain is tRNA N6-adenosine threonylcarbamoyltransferase from Hyperthermus butylicus (strain DSM 5456 / JCM 9403 / PLM1-5).